The sequence spans 628 residues: Isoleucine--tRNA ligase (628 aa).

The short motif at 505-509 is the 'KMSKS' region element; the sequence is KMSKR. Position 508 (K508) interacts with ATP.

The protein belongs to the class-I aminoacyl-tRNA synthetase family.

The catalysed reaction is tRNA(Ile) + L-isoleucine + ATP = L-isoleucyl-tRNA(Ile) + AMP + diphosphate. The protein is Isoleucine--tRNA ligase of Antonospora locustae (Microsporidian parasite).